The primary structure comprises 1295 residues: Phosphoribosylformylglycinamidine synthase (1295 aa).

The interval serine 302–proline 327 is disordered. Residues glycine 306–aspartate 317 and alanine 677 contribute to the ATP site. Mg(2+) is bound by residues aspartate 678, glutamate 717, asparagine 721, and aspartate 884. An ATP-binding site is contributed by serine 886. Residues valine 1042 to glycine 1295 form the Glutamine amidotransferase type-1 domain. Cysteine 1135 (nucleophile) is an active-site residue. Active-site residues include histidine 1260 and glutamate 1262.

In the N-terminal section; belongs to the FGAMS family. As to quaternary structure, monomer.

The protein localises to the cytoplasm. The enzyme catalyses N(2)-formyl-N(1)-(5-phospho-beta-D-ribosyl)glycinamide + L-glutamine + ATP + H2O = 2-formamido-N(1)-(5-O-phospho-beta-D-ribosyl)acetamidine + L-glutamate + ADP + phosphate + H(+). Its pathway is purine metabolism; IMP biosynthesis via de novo pathway; 5-amino-1-(5-phospho-D-ribosyl)imidazole from N(2)-formyl-N(1)-(5-phospho-D-ribosyl)glycinamide: step 1/2. Phosphoribosylformylglycinamidine synthase involved in the purines biosynthetic pathway. Catalyzes the ATP-dependent conversion of formylglycinamide ribonucleotide (FGAR) and glutamine to yield formylglycinamidine ribonucleotide (FGAM) and glutamate. The protein is Phosphoribosylformylglycinamidine synthase of Photorhabdus laumondii subsp. laumondii (strain DSM 15139 / CIP 105565 / TT01) (Photorhabdus luminescens subsp. laumondii).